Reading from the N-terminus, the 360-residue chain is DnaJ homolog subfamily C member 25 (360 aa).

Residues 20-40 (WMLLAPLLPALLLVRPAGALV) form a helical membrane-spanning segment. Positions 49–124 (DCYEVLGVSR…ETRKDYDYML (76 aa)) constitute a J domain. 2 consecutive transmembrane segments (helical) span residues 150-170 (VVIL…WWNS) and 244-264 (LLLF…VWYC).

It belongs to the DNAJC25 family.

Its subcellular location is the membrane. The polypeptide is DnaJ homolog subfamily C member 25 (DNAJC25) (Homo sapiens (Human)).